A 221-amino-acid polypeptide reads, in one-letter code: Pectate lyase C (221 aa).

Residues 1 to 27 (MKKIVSILFMFGLVMGFSQFQPSTVFA) form the signal peptide.

It belongs to the polysaccharide lyase 3 family. Ca(2+) serves as cofactor.

It localises to the secreted. The enzyme catalyses Eliminative cleavage of (1-&gt;4)-alpha-D-galacturonan to give oligosaccharides with 4-deoxy-alpha-D-galact-4-enuronosyl groups at their non-reducing ends.. It catalyses the reaction Eliminative cleavage of (1-&gt;4)-alpha-D-galacturonan methyl ester to give oligosaccharides with 4-deoxy-6-O-methyl-alpha-D-galact-4-enuronosyl groups at their non-reducing ends.. It functions in the pathway glycan metabolism; pectin degradation; 2-dehydro-3-deoxy-D-gluconate from pectin: step 2/5. In terms of biological role, catalyzes the depolymerization of both polygalacturonate and pectins of methyl esterification degree from 22 to 89%, with an endo mode of action. In contrast to the majority of pectate lyases, displays high activity on highly methylated pectins. Is also able to cleave trigalacturonate to galacturonic acid and unsaturated digalacturonate. The chain is Pectate lyase C (pelC) from Bacillus subtilis (strain 168).